The sequence spans 555 residues: Hydroxylamine reductase (555 aa).

The [4Fe-4S] cluster site is built by cysteine 3, cysteine 6, cysteine 18, and cysteine 25. Positions 252, 276, 320, 407, 435, 460, 494, and 496 each coordinate hybrid [4Fe-2O-2S] cluster. Cysteine 407 bears the Cysteine persulfide mark.

This sequence belongs to the HCP family. [4Fe-4S] cluster serves as cofactor. It depends on hybrid [4Fe-2O-2S] cluster as a cofactor.

It localises to the cytoplasm. The catalysed reaction is A + NH4(+) + H2O = hydroxylamine + AH2 + H(+). Catalyzes the reduction of hydroxylamine to form NH(3) and H(2)O. This chain is Hydroxylamine reductase, found in Burkholderia lata (strain ATCC 17760 / DSM 23089 / LMG 22485 / NCIMB 9086 / R18194 / 383).